The sequence spans 143 residues: Large ribosomal subunit protein uL15 (143 aa).

The disordered stretch occupies residues 1–51; the sequence is MELNGIKPAAGAKHAKRRVGRGIGSGIGKTAGRGHKGQKSRAGGFHKVGFE. Residues 21-31 are compositionally biased toward gly residues; the sequence is RGIGSGIGKTA.

Belongs to the universal ribosomal protein uL15 family. Part of the 50S ribosomal subunit.

Functionally, binds to the 23S rRNA. In Variovorax paradoxus (strain S110), this protein is Large ribosomal subunit protein uL15.